Reading from the N-terminus, the 481-residue chain is Exodeoxyribonuclease I (481 aa).

An Exonuclease domain is found at 12 to 193 (LFYDYETFGK…SSDVYATMNI (182 aa)). 3 residues coordinate Mg(2+): aspartate 15, glutamate 17, and aspartate 186. A substrate-binding site is contributed by glutamate 17. Residues 202 to 350 (PKLFNFFFKY…KLKKFLCSIA (149 aa)) form the ExoI SH3-like domain. Residues 356–471 (NGSNVDLKMY…ELFEYVKYTR (116 aa)) form the ExoI C-terminal domain.

In terms of assembly, monomer. Interacts with ssb (via C-terminus); this interaction stimulates the exonuclease activity by recruiting the enzyme to its substrate. Mg(2+) serves as cofactor.

It carries out the reaction Exonucleolytic cleavage in the 3'- to 5'-direction to yield nucleoside 5'-phosphates.. Functionally, degrades single-stranded DNA (ssDNA) in a highly processive manner. Also functions as a DNA deoxyribophosphodiesterase that releases deoxyribose-phosphate moieties following the cleavage of DNA at an apurinic/apyrimidinic (AP) site by either an AP endonuclease or AP lyase. The sequence is that of Exodeoxyribonuclease I (sbcB) from Buchnera aphidicola subsp. Baizongia pistaciae (strain Bp).